The following is a 145-amino-acid chain: Basic phospholipase A2 PC10 (145 aa).

The signal sequence occupies residues 1–21 (MYPAHLLLLLAVCVSLLGASA). Residues 22 to 27 (IPPLPL) constitute a propeptide that is removed on maturation. Disulfide bonds link Cys38–Cys98, Cys54–Cys144, Cys56–Cys72, Cys71–Cys125, Cys78–Cys118, Cys87–Cys111, and Cys105–Cys116. 3 residues coordinate Ca(2+): Tyr55, Gly57, and Gly59. Residue His75 is part of the active site. Residue Asp76 participates in Ca(2+) binding. Residue Asp119 is part of the active site.

It belongs to the phospholipase A2 family. Group I subfamily. D49 sub-subfamily. Requires Ca(2+) as cofactor.

The protein localises to the secreted. The catalysed reaction is a 1,2-diacyl-sn-glycero-3-phosphocholine + H2O = a 1-acyl-sn-glycero-3-phosphocholine + a fatty acid + H(+). Its function is as follows. PLA2 catalyzes the calcium-dependent hydrolysis of the 2-acyl groups in 3-sn-phosphoglycerides. This is Basic phospholipase A2 PC10 from Laticauda laticaudata (Blue-ringed sea krait).